The primary structure comprises 200 residues: Large ribosomal subunit protein uL4 (200 aa).

A disordered region spans residues 38–72 (GRQGTKQQKTRSDVAGGGKRPWRQKGTGRARAGTT).

This sequence belongs to the universal ribosomal protein uL4 family. In terms of assembly, part of the 50S ribosomal subunit.

One of the primary rRNA binding proteins, this protein initially binds near the 5'-end of the 23S rRNA. It is important during the early stages of 50S assembly. It makes multiple contacts with different domains of the 23S rRNA in the assembled 50S subunit and ribosome. Functionally, forms part of the polypeptide exit tunnel. This chain is Large ribosomal subunit protein uL4, found in Pseudomonas putida (strain ATCC 700007 / DSM 6899 / JCM 31910 / BCRC 17059 / LMG 24140 / F1).